We begin with the raw amino-acid sequence, 110 residues long: UPF0060 membrane protein MMAR_2961 (110 aa).

The next 4 helical transmembrane spans lie at 6–26, 32–52, 61–81, and 90–110; these read ILLF…VWQG, GLAW…VATL, ILAA…MAFD, and IVGA…PRAH.

It belongs to the UPF0060 family.

It localises to the cell membrane. The sequence is that of UPF0060 membrane protein MMAR_2961 from Mycobacterium marinum (strain ATCC BAA-535 / M).